A 406-amino-acid polypeptide reads, in one-letter code: Cysteine desulfurase (406 aa).

An N6-(pyridoxal phosphate)lysine modification is found at K226. The active-site Cysteine persulfide intermediate is the C364.

Belongs to the class-V pyridoxal-phosphate-dependent aminotransferase family. Csd subfamily. In terms of assembly, homodimer. Interacts with SufE and the SufBCD complex composed of SufB, SufC and SufD. The interaction with SufE is required to mediate the direct transfer of the sulfur atom from the S-sulfanylcysteine. Pyridoxal 5'-phosphate is required as a cofactor.

The protein localises to the cytoplasm. The enzyme catalyses (sulfur carrier)-H + L-cysteine = (sulfur carrier)-SH + L-alanine. It carries out the reaction L-selenocysteine + AH2 = hydrogenselenide + L-alanine + A + H(+). Its pathway is cofactor biosynthesis; iron-sulfur cluster biosynthesis. Its function is as follows. Cysteine desulfurases mobilize the sulfur from L-cysteine to yield L-alanine, an essential step in sulfur metabolism for biosynthesis of a variety of sulfur-containing biomolecules. Component of the suf operon, which is activated and required under specific conditions such as oxidative stress and iron limitation. Acts as a potent selenocysteine lyase in vitro, that mobilizes selenium from L-selenocysteine. Selenocysteine lyase activity is however unsure in vivo. The chain is Cysteine desulfurase from Salmonella agona (strain SL483).